We begin with the raw amino-acid sequence, 101 residues long: Thrombin-like enzyme okinaxobin-1 (101 aa).

Residues 1 to 16 (LIRVLANLLILQLSYA) form the signal peptide. The propeptide occupies 17-22 (QKSSEL). The Peptidase S1 domain occupies 23–101 (VIGGDECNIN…PKKKYFFRCR (79 aa)). An intrachain disulfide couples C50 to C66. The active-site Charge relay system is H65.

Belongs to the peptidase S1 family. Snake venom subfamily. Monomer. Glycosylated. As to expression, expressed by the venom gland.

The protein localises to the secreted. Its activity is regulated as follows. Strongly inactivated by diisopropylfluorophosphate (DFP) and phenylmethanesulfonyl fluoride (PMSF), and to a lesser extent by tosyl-L-lysine chloromethyl ketone (TLCK). Functionally, thrombin-like snake venom serine protease that releases specifically fibrinopeptide B from fibrinogen (FGB) to form fibrin clots. Shows a preferential cleavage at Arg-|-Gly bonds in fibrinogen beta chains. Cleaves fibrinogen beta chains preferentially to alpha chains. The sequence is that of Thrombin-like enzyme okinaxobin-1 from Ovophis okinavensis (Ryukyu Island pit viper).